The primary structure comprises 417 residues: UDP-N-acetylglucosamine 1-carboxyvinyltransferase (417 aa).

22-23 (KN) lines the phosphoenolpyruvate pocket. Arg91 contributes to the UDP-N-acetyl-alpha-D-glucosamine binding site. Catalysis depends on Cys115, which acts as the Proton donor. At Cys115 the chain carries 2-(S-cysteinyl)pyruvic acid O-phosphothioketal. Residues 120–124 (RPVDL), Asp304, and Ile326 contribute to the UDP-N-acetyl-alpha-D-glucosamine site.

Belongs to the EPSP synthase family. MurA subfamily.

The protein localises to the cytoplasm. The catalysed reaction is phosphoenolpyruvate + UDP-N-acetyl-alpha-D-glucosamine = UDP-N-acetyl-3-O-(1-carboxyvinyl)-alpha-D-glucosamine + phosphate. It functions in the pathway cell wall biogenesis; peptidoglycan biosynthesis. Its function is as follows. Cell wall formation. Adds enolpyruvyl to UDP-N-acetylglucosamine. The polypeptide is UDP-N-acetylglucosamine 1-carboxyvinyltransferase (Nitratidesulfovibrio vulgaris (strain DP4) (Desulfovibrio vulgaris)).